The primary structure comprises 269 residues: Phosphate import ATP-binding protein PstB (269 aa).

The 240-residue stretch at 14 to 253 folds into the ABC transporter domain; it reads LTLEDVSISY…EFDSTKKIFS (240 aa). 46–53 lines the ATP pocket; sequence GPSGCGKS.

This sequence belongs to the ABC transporter superfamily. Phosphate importer (TC 3.A.1.7) family. As to quaternary structure, the complex is composed of two ATP-binding proteins (PstB), two transmembrane proteins (PstC and PstA) and a solute-binding protein (PstS).

The protein localises to the cell inner membrane. It catalyses the reaction phosphate(out) + ATP + H2O = ADP + 2 phosphate(in) + H(+). Its function is as follows. Part of the ABC transporter complex PstSACB involved in phosphate import. Responsible for energy coupling to the transport system. This Prochlorococcus marinus subsp. pastoris (strain CCMP1986 / NIES-2087 / MED4) protein is Phosphate import ATP-binding protein PstB.